We begin with the raw amino-acid sequence, 515 residues long: MDEFHRCGKEDSFWQPCFLYPLFFQEDLYAISHDHYLDVSSSSRPMEHLSSNDQLSFLTVKRLIGQIRQQNHSIVLFVNCDPNPLADRKKSFYSESVLEALTLVLEVPFSIWSKSSVEGMNECKSFRSIHSIFPFLEDKFPHSNSILDARIPYSIHPEILVRTFRRWIRDAPSLHPLRSVLYDYRNSPENLQRSIIVVPRVNTRFFLFLLNYYVWECESILFSRLKRSSHSRSLAHGSFPQRTHFHRKIKHIIIFSRRNSLKSIWSLKDPKIHYVRYGERPIIAIKGADLLVKKCRYYLLIFRQFYFHLWSEPYRVCSHQLSKNCSSSPGYFLRVRMNPLLVRTKTLDELFIPVLITNEMDPIVPIVPIIGLLATEKFCDISGRPISKLSWTSLTDDDILDRFDQIWRNLFHYYSGSFDRDGLYRIKYILLLSCAKTLACKHKSTIRVVRKELGPELFKKSFSKEREFDSLPFSSKAAARSQRERIWHSDIPQINPLANSWQKIQDLKIENLFDQ.

It belongs to the intron maturase 2 family. MatK subfamily.

It is found in the plastid. Its subcellular location is the chloroplast. In terms of biological role, usually encoded in the trnK tRNA gene intron. Probably assists in splicing its own and other chloroplast group II introns. This Pinus yunnanensis (Yunnan pine) protein is Maturase K.